The following is a 424-amino-acid chain: D-inositol 3-phosphate glycosyltransferase (424 aa).

His16 contacts 1D-myo-inositol 3-phosphate. Residues 22–23 (QP) and Gly30 contribute to the UDP-N-acetyl-alpha-D-glucosamine site. 1D-myo-inositol 3-phosphate contacts are provided by residues 27–32 (DAGGMN), Lys85, Tyr118, Thr142, and Arg162. Residues Arg240 and Lys245 each contribute to the UDP-N-acetyl-alpha-D-glucosamine site. The Mg(2+) site is built by Met313, Arg314, and Ala316. UDP-N-acetyl-alpha-D-glucosamine is bound by residues Glu326 and Glu334. Residue Thr340 participates in Mg(2+) binding.

Belongs to the glycosyltransferase group 1 family. MshA subfamily. In terms of assembly, homodimer.

The catalysed reaction is 1D-myo-inositol 3-phosphate + UDP-N-acetyl-alpha-D-glucosamine = 1D-myo-inositol 2-acetamido-2-deoxy-alpha-D-glucopyranoside 3-phosphate + UDP + H(+). Catalyzes the transfer of a N-acetyl-glucosamine moiety to 1D-myo-inositol 3-phosphate to produce 1D-myo-inositol 2-acetamido-2-deoxy-glucopyranoside 3-phosphate in the mycothiol biosynthesis pathway. This is D-inositol 3-phosphate glycosyltransferase from Jonesia denitrificans (strain ATCC 14870 / DSM 20603 / BCRC 15368 / CIP 55.134 / JCM 11481 / NBRC 15587 / NCTC 10816 / Prevot 55134) (Listeria denitrificans).